Here is a 245-residue protein sequence, read N- to C-terminus: Octanoyltransferase (245 aa).

The BPL/LPL catalytic domain occupies Gly-54–Arg-238. Substrate is bound by residues Arg-92–His-99, Ala-167–Gly-169, and Gly-180–Ala-182. Catalysis depends on Cys-198, which acts as the Acyl-thioester intermediate.

It belongs to the LipB family.

Its subcellular location is the cytoplasm. The enzyme catalyses octanoyl-[ACP] + L-lysyl-[protein] = N(6)-octanoyl-L-lysyl-[protein] + holo-[ACP] + H(+). It functions in the pathway protein modification; protein lipoylation via endogenous pathway; protein N(6)-(lipoyl)lysine from octanoyl-[acyl-carrier-protein]: step 1/2. Its function is as follows. Catalyzes the transfer of endogenously produced octanoic acid from octanoyl-acyl-carrier-protein onto the lipoyl domains of lipoate-dependent enzymes. Lipoyl-ACP can also act as a substrate although octanoyl-ACP is likely to be the physiological substrate. The chain is Octanoyltransferase from Rhodopseudomonas palustris (strain ATCC BAA-98 / CGA009).